Consider the following 986-residue polypeptide: Ephrin type-A receptor 4-A (986 aa).

The first 20 residues, methionine 1 to valine 20, serve as a signal peptide directing secretion. The Extracellular segment spans residues threonine 21–valine 547. In terms of domain architecture, Eph LBD spans glutamate 30–arginine 209. 2 Fibronectin type-III domains span residues proline 328–alanine 438 and alanine 439–serine 536. Asparagine 340 and asparagine 407 each carry an N-linked (GlcNAc...) asparagine glycan. The helical transmembrane segment at leucine 548–serine 569 threads the bilayer. The Cytoplasmic segment spans residues arginine 570–valine 986. Residues tyrosine 595 and tyrosine 601 each carry the phosphotyrosine; by autocatalysis modification. A Protein kinase domain is found at isoleucine 620–isoleucine 881. ATP-binding positions include isoleucine 626 to valine 634 and lysine 652. The Proton acceptor role is filled by aspartate 745. 2 positions are modified to phosphotyrosine; by autocatalysis: tyrosine 778 and tyrosine 928. In terms of domain architecture, SAM spans serine 911–glutamine 975. The PDZ-binding motif lies at valine 984–valine 986.

The protein belongs to the protein kinase superfamily. Tyr protein kinase family. Ephrin receptor subfamily.

It is found in the cell membrane. It localises to the early endosome. It carries out the reaction L-tyrosyl-[protein] + ATP = O-phospho-L-tyrosyl-[protein] + ADP + H(+). Functionally, receptor tyrosine kinase which binds membrane-bound ephrin family ligands residing on adjacent cells, leading to contact-dependent bidirectional signaling into neighboring cells. The signaling pathway downstream of the receptor is referred to as forward signaling while the signaling pathway downstream of the ephrin ligand is referred to as reverse signaling. Highly promiscuous, it has the unique property among Eph receptors to bind and to be physiologically activated by both GPI-anchored ephrin-A and transmembrane ephrin-B ligands including EFNA1 and EFNB3. Upon activation by ephrin ligands, modulates cell morphology and integrin-dependent cell adhesion through regulation of the Rac, Rap and Rho GTPases activity. Plays an important role in the development of the nervous system controlling different steps of axonal guidance including the establishment of the corticospinal projections. This chain is Ephrin type-A receptor 4-A (epha4-a), found in Xenopus laevis (African clawed frog).